A 254-amino-acid polypeptide reads, in one-letter code: Type II restriction enzyme HpaI (254 aa).

The enzyme catalyses Endonucleolytic cleavage of DNA to give specific double-stranded fragments with terminal 5'-phosphates.. Functionally, a P subtype restriction enzyme that recognizes the double-stranded sequence 5'-GTTAAC-3' and cleaves after T-3. The chain is Type II restriction enzyme HpaI (hpaIR) from Haemophilus parainfluenzae.